We begin with the raw amino-acid sequence, 385 residues long: MTSSINILLLLHPTVVTDAHSVEQIKSKIYQSHNNDINSININQQIIDRITKGVIELPNDYYDEIIYINPNDEPQYREIPISLMQLIYKLLKSNGKFKGDLPLDQNLDVLMTGFIIEEEEQEQQEQQSGLNEGTVYVWVKPIPVDEPVVTLLKKKTTNNTKKSLPLFKKLNKNDMTINVPQEIDNITNNKRKLVETKLTYFSSDDENSSDGSLSDNANEEEEDDDELIDENDLLKYNNHNNNNNNNGEQSFSDKLITPRKCELSLNGGKKRKKACKDCTCGLKELEELEVSNQQNLQDQILGKLAQSATLEAIKIEERLKQQSQKKIKFTEEDLSEIDFTVQGKTGGCGSCALGDAFRCDGCPYLGLPPFKPGEVVKLDGFGEDI.

The N-terminal SAM-like domain stretch occupies residues 1–177; sequence MTSSINILLL…KKLNKNDMTI (177 aa). Positions 178–240 are linker; the sequence is NVPQEIDNIT…NDLLKYNNHN (63 aa). The segment at 200-226 is disordered; sequence YFSSDDENSSDGSLSDNANEEEEDDDE. Residues 217–226 show a composition bias toward acidic residues; that stretch reads ANEEEEDDDE. Cysteine 261, cysteine 275, cysteine 278, and cysteine 280 together coordinate [2Fe-2S] cluster. The segment at 261–280 is fe-S binding site A; sequence CELSLNGGKKRKKACKDCTC. Residues cysteine 348, cysteine 351, cysteine 359, and cysteine 362 each contribute to the [4Fe-4S] cluster site. Short sequence motifs (cx2C motif) lie at residues 348 to 351 and 359 to 362; these read CGSC and CDGC. Positions 348 to 362 are fe-S binding site B; sequence CGSCALGDAFRCDGC.

It belongs to the anamorsin family. As to quaternary structure, monomer. Interacts with TAH18. Interacts with MIA40. The cofactor is [2Fe-2S] cluster. [4Fe-4S] cluster is required as a cofactor.

The protein localises to the cytoplasm. It localises to the mitochondrion intermembrane space. Component of the cytosolic iron-sulfur (Fe-S) protein assembly (CIA) machinery required for the maturation of extramitochondrial Fe-S proteins. Part of an electron transfer chain functioning in an early step of cytosolic Fe-S biogenesis, facilitating the de novo assembly of a [4Fe-4S] cluster on the scaffold complex CFD1-NBP35. Electrons are transferred to DRE2 from NADPH via the FAD- and FMN-containing protein TAH18. TAH18-DRE2 are also required for the assembly of the diferric tyrosyl radical cofactor of ribonucleotide reductase (RNR), probably by providing electrons for reduction during radical cofactor maturation in the catalytic small subunit RNR2. This chain is Fe-S cluster assembly protein DRE2, found in Candida dubliniensis (strain CD36 / ATCC MYA-646 / CBS 7987 / NCPF 3949 / NRRL Y-17841) (Yeast).